Reading from the N-terminus, the 149-residue chain is MQVILLDKIGNLGSLGDTVNVKSGYARNFLIPQGKAVMATKANVAMFESRRAELEAKVAEQLAAAQTRADQVNALEAVVIASKAGDEGKLFGSIGTRDIADAITAAGVKVSKSEVRLPEGALRNVGAYEVSVQLHSEVFATAKVQVVAE.

Belongs to the bacterial ribosomal protein bL9 family.

Functionally, binds to the 23S rRNA. The polypeptide is Large ribosomal subunit protein bL9 (Vibrio cholerae serotype O1 (strain ATCC 39541 / Classical Ogawa 395 / O395)).